The following is a 309-amino-acid chain: Probable manganese-dependent inorganic pyrophosphatase (309 aa).

Positions 9, 13, 15, 75, 97, and 149 each coordinate Mn(2+).

The protein belongs to the PPase class C family. The cofactor is Mn(2+).

Its subcellular location is the cytoplasm. The catalysed reaction is diphosphate + H2O = 2 phosphate + H(+). In Bacillus anthracis (strain CDC 684 / NRRL 3495), this protein is Probable manganese-dependent inorganic pyrophosphatase.